Reading from the N-terminus, the 216-residue chain is Probable GTP-binding protein EngB (216 aa).

The 175-residue stretch at 27–201 (GGVEIAFAGR…AQTLTGWYLA (175 aa)) folds into the EngB-type G domain. Residues 35–42 (GRSNAGKS), 62–66 (GRTQL), 80–83 (DLPG), 147–150 (TKAD), and 180–182 (FSS) contribute to the GTP site. Serine 42 and threonine 64 together coordinate Mg(2+).

It belongs to the TRAFAC class TrmE-Era-EngA-EngB-Septin-like GTPase superfamily. EngB GTPase family. Requires Mg(2+) as cofactor.

In terms of biological role, necessary for normal cell division and for the maintenance of normal septation. The sequence is that of Probable GTP-binding protein EngB from Aeromonas hydrophila subsp. hydrophila (strain ATCC 7966 / DSM 30187 / BCRC 13018 / CCUG 14551 / JCM 1027 / KCTC 2358 / NCIMB 9240 / NCTC 8049).